The sequence spans 487 residues: N-succinylglutamate 5-semialdehyde dehydrogenase (487 aa).

Residue 221-226 (GSSRTG) participates in NAD(+) binding. Residues Glu244 and Cys278 contribute to the active site.

It belongs to the aldehyde dehydrogenase family. AstD subfamily.

It catalyses the reaction N-succinyl-L-glutamate 5-semialdehyde + NAD(+) + H2O = N-succinyl-L-glutamate + NADH + 2 H(+). Its pathway is amino-acid degradation; L-arginine degradation via AST pathway; L-glutamate and succinate from L-arginine: step 4/5. Functionally, catalyzes the NAD-dependent reduction of succinylglutamate semialdehyde into succinylglutamate. This chain is N-succinylglutamate 5-semialdehyde dehydrogenase, found in Pseudomonas putida (strain ATCC 700007 / DSM 6899 / JCM 31910 / BCRC 17059 / LMG 24140 / F1).